Consider the following 407-residue polypeptide: Proteasome-activating nucleotidase (407 aa).

Positions 22-67 (KEKTQIAELESKVLRLELKNKDISRENVQIKKENEILKRELDKLRI) form a coiled coil. ATP contacts are provided by residues 192–197 (GTGKTL) and histidine 331. The segment at 405 to 407 (MYG) is docks into pockets in the proteasome alpha-ring to cause gate opening.

The protein belongs to the AAA ATPase family. In terms of assembly, homohexamer. The hexameric complex has a two-ring architecture resembling a top hat that caps the 20S proteasome core at one or both ends. Upon ATP-binding, the C-terminus of PAN interacts with the alpha-rings of the proteasome core by binding to the intersubunit pockets.

Its subcellular location is the cytoplasm. In terms of biological role, ATPase which is responsible for recognizing, binding, unfolding and translocation of substrate proteins into the archaeal 20S proteasome core particle. Is essential for opening the gate of the 20S proteasome via an interaction with its C-terminus, thereby allowing substrate entry and access to the site of proteolysis. Thus, the C-termini of the proteasomal ATPase function like a 'key in a lock' to induce gate opening and therefore regulate proteolysis. Unfolding activity requires energy from ATP hydrolysis, whereas ATP binding alone promotes ATPase-20S proteasome association which triggers gate opening, and supports translocation of unfolded substrates. In Methanococcus maripaludis (strain C6 / ATCC BAA-1332), this protein is Proteasome-activating nucleotidase.